Here is a 444-residue protein sequence, read N- to C-terminus: 23S rRNA (uracil(1939)-C(5))-methyltransferase RlmD (444 aa).

The TRAM domain occupies 5–67 (RSRIDRTPFQ…RHFDEARTVE (63 aa)). [4Fe-4S] cluster-binding residues include Cys-80, Cys-86, Cys-89, and Cys-168. S-adenosyl-L-methionine-binding residues include Gln-276, Phe-305, Asn-310, Glu-326, Asp-353, and Asp-374. Cys-400 acts as the Nucleophile in catalysis.

Belongs to the class I-like SAM-binding methyltransferase superfamily. RNA M5U methyltransferase family. RlmD subfamily.

The catalysed reaction is uridine(1939) in 23S rRNA + S-adenosyl-L-methionine = 5-methyluridine(1939) in 23S rRNA + S-adenosyl-L-homocysteine + H(+). Functionally, catalyzes the formation of 5-methyl-uridine at position 1939 (m5U1939) in 23S rRNA. In Stenotrophomonas maltophilia (strain K279a), this protein is 23S rRNA (uracil(1939)-C(5))-methyltransferase RlmD.